The sequence spans 201 residues: Protein GrpE (201 aa).

Belongs to the GrpE family. As to quaternary structure, homodimer.

The protein localises to the cytoplasm. Functionally, participates actively in the response to hyperosmotic and heat shock by preventing the aggregation of stress-denatured proteins, in association with DnaK and GrpE. It is the nucleotide exchange factor for DnaK and may function as a thermosensor. Unfolded proteins bind initially to DnaJ; upon interaction with the DnaJ-bound protein, DnaK hydrolyzes its bound ATP, resulting in the formation of a stable complex. GrpE releases ADP from DnaK; ATP binding to DnaK triggers the release of the substrate protein, thus completing the reaction cycle. Several rounds of ATP-dependent interactions between DnaJ, DnaK and GrpE are required for fully efficient folding. This is Protein GrpE from Shewanella denitrificans (strain OS217 / ATCC BAA-1090 / DSM 15013).